We begin with the raw amino-acid sequence, 620 residues long: Chaperone protein HscA homolog (620 aa).

The protein belongs to the heat shock protein 70 family.

Functionally, chaperone involved in the maturation of iron-sulfur cluster-containing proteins. Has a low intrinsic ATPase activity which is markedly stimulated by HscB. This chain is Chaperone protein HscA homolog, found in Pseudomonas syringae pv. tomato (strain ATCC BAA-871 / DC3000).